Consider the following 315-residue polypeptide: MTEAWRPDGDEPRGVSGPFRVRVPAKINLHLGVGPLRPDGYHELNTVYHAISIHDELTARRGDTLALTMEGEGAGELALDDSNLVIRAARALAAHAGVPPYARLHLRKQIPLAGGLAGGSADAAAALVACDALWGTGLSRDELAGIAADLGSDVPFLIHGGTALGTGRGEAVSPVLARPTVWHWVVAVADGGLSTPVAYRELDRLRDAGAASTPLGSSDALLAALRQRDPRVLAGVLGNDLQDAALALRPSLAATLKAGEAAGALAGIVSGSGPTCVFLAANAADAERVAGELSALDVCRQARTARGPVAGARVG.

The active site involves lysine 26. 111 to 121 (PLAGGLAGGSA) contacts ATP. Residue aspartate 153 is part of the active site.

This sequence belongs to the GHMP kinase family. IspE subfamily.

The catalysed reaction is 4-CDP-2-C-methyl-D-erythritol + ATP = 4-CDP-2-C-methyl-D-erythritol 2-phosphate + ADP + H(+). It participates in isoprenoid biosynthesis; isopentenyl diphosphate biosynthesis via DXP pathway; isopentenyl diphosphate from 1-deoxy-D-xylulose 5-phosphate: step 3/6. Its function is as follows. Catalyzes the phosphorylation of the position 2 hydroxy group of 4-diphosphocytidyl-2C-methyl-D-erythritol. This chain is 4-diphosphocytidyl-2-C-methyl-D-erythritol kinase, found in Salinispora arenicola (strain CNS-205).